Reading from the N-terminus, the 431-residue chain is Adenylosuccinate synthetase (431 aa).

GTP-binding positions include 12 to 18 and 40 to 42; these read GDEGKGK and GHT. Asp13 functions as the Proton acceptor in the catalytic mechanism. 2 residues coordinate Mg(2+): Asp13 and Gly40. Residues 13–16, 38–41, Thr130, Arg144, Gln225, Thr240, and Arg304 each bind IMP; these read DEGK and NAGH. His41 acts as the Proton donor in catalysis. 300–306 provides a ligand contact to substrate; sequence ATTGRPR. GTP is bound by residues Arg306, 332–334, and 414–416; these read KLD and SVG.

The protein belongs to the adenylosuccinate synthetase family. In terms of assembly, homodimer. It depends on Mg(2+) as a cofactor.

It localises to the cytoplasm. The enzyme catalyses IMP + L-aspartate + GTP = N(6)-(1,2-dicarboxyethyl)-AMP + GDP + phosphate + 2 H(+). Its pathway is purine metabolism; AMP biosynthesis via de novo pathway; AMP from IMP: step 1/2. Plays an important role in the de novo pathway of purine nucleotide biosynthesis. Catalyzes the first committed step in the biosynthesis of AMP from IMP. In Anaeromyxobacter sp. (strain Fw109-5), this protein is Adenylosuccinate synthetase.